Here is a 266-residue protein sequence, read N- to C-terminus: Nuclease (266 aa).

A signal peptide spans 1–21 (MRFNNKMLALAALLFAAQASA). A disulfide bridge links Cys-30 with Cys-34. His-110 acts as the Proton acceptor in catalysis. Asn-140 lines the Mg(2+) pocket. Cysteines 222 and 264 form a disulfide.

It belongs to the DNA/RNA non-specific endonuclease family. As to quaternary structure, homodimer. Mg(2+) serves as cofactor.

It localises to the secreted. It catalyses the reaction Endonucleolytic cleavage to 5'-phosphomononucleotide and 5'-phosphooligonucleotide end-products.. Functionally, catalyzes the hydrolysis of both DNA and RNA, double- or single-stranded, at the 3'position of the phosphodiester bond to produce 5'-phosphorylated mono-, di-, tri- and tetranucleotides. DNA is a slightly better substrate than RNA. The polypeptide is Nuclease (nucA) (Serratia marcescens).